Consider the following 602-residue polypeptide: Toxin YwqJ (602 aa).

The LXG domain maps to 1–235 (MSKVFESKSL…TTYIDAKTQQ (235 aa)). Coiled-coil stretches lie at residues 6 to 41 (ESKS…VADL) and 227 to 251 (TYID…EANK).

In the N-terminal section; belongs to the LXG family. Probably interacts with cognate immunity protein YwqK but not with non-cognate immunity proteins. The interaction inhibits the toxic activity of YwqJ.

It is found in the secreted. Toxic component of one of 6 LXG toxin-immunity modules in this strain. They promote kin selection, mediate competition in biofilms, and drive spatial segregation of different strains, indicating that LXG toxins may help avoid warfare between strains in biofilms. Mediates intercellular competition during biofilm formation; disruption of the operon disadvantages the bacteria, but overexpression of the cognate immunity protein restores growth in competition with wild-type. Overexpression alone in situ causes growth arrest but not cell lysis; no effect is seen on DNA or rRNA. Co-overexpression with cognate immunity protein YwqK does not cause growth arrest. The toxic effect is dependent on the epsA and tapA operons which are required for biofilm formation. Its toxic effects are probably neutralized by its cognate immunity protein YwqK, but not by immunity proteins specific to other toxins with the LXG domain. May have deaminase activity. The chain is Toxin YwqJ (ywqJ) from Bacillus subtilis (strain 168).